Reading from the N-terminus, the 768-residue chain is DNA ligase (768 aa).

NAD(+) is bound by residues 30–34 (DAEYD), 79–80 (SL), and Glu-190. Lys-192 functions as the N6-AMP-lysine intermediate in the catalytic mechanism. NAD(+) contacts are provided by Arg-213, Glu-250, Lys-367, and Lys-391. Zn(2+)-binding residues include Cys-485, Cys-488, Cys-503, and Cys-509. The BRCT domain occupies 678 to 767 (AAEQPLSGLS…IPPEIQARMQ (90 aa)).

This sequence belongs to the NAD-dependent DNA ligase family. LigA subfamily. It depends on Mg(2+) as a cofactor. The cofactor is Mn(2+).

It catalyses the reaction NAD(+) + (deoxyribonucleotide)n-3'-hydroxyl + 5'-phospho-(deoxyribonucleotide)m = (deoxyribonucleotide)n+m + AMP + beta-nicotinamide D-nucleotide.. Its function is as follows. DNA ligase that catalyzes the formation of phosphodiester linkages between 5'-phosphoryl and 3'-hydroxyl groups in double-stranded DNA using NAD as a coenzyme and as the energy source for the reaction. It is essential for DNA replication and repair of damaged DNA. The sequence is that of DNA ligase from Magnetococcus marinus (strain ATCC BAA-1437 / JCM 17883 / MC-1).